We begin with the raw amino-acid sequence, 95 residues long: Aspartyl/glutamyl-tRNA(Asn/Gln) amidotransferase subunit C (95 aa).

The protein belongs to the GatC family. As to quaternary structure, heterotrimer of A, B and C subunits.

The catalysed reaction is L-glutamyl-tRNA(Gln) + L-glutamine + ATP + H2O = L-glutaminyl-tRNA(Gln) + L-glutamate + ADP + phosphate + H(+). It catalyses the reaction L-aspartyl-tRNA(Asn) + L-glutamine + ATP + H2O = L-asparaginyl-tRNA(Asn) + L-glutamate + ADP + phosphate + 2 H(+). Functionally, allows the formation of correctly charged Asn-tRNA(Asn) or Gln-tRNA(Gln) through the transamidation of misacylated Asp-tRNA(Asn) or Glu-tRNA(Gln) in organisms which lack either or both of asparaginyl-tRNA or glutaminyl-tRNA synthetases. The reaction takes place in the presence of glutamine and ATP through an activated phospho-Asp-tRNA(Asn) or phospho-Glu-tRNA(Gln). The protein is Aspartyl/glutamyl-tRNA(Asn/Gln) amidotransferase subunit C of Phenylobacterium zucineum (strain HLK1).